The primary structure comprises 306 residues: Agmatinase (306 aa).

H128, D151, H153, D155, D232, and D234 together coordinate Mn(2+).

Belongs to the arginase family. Agmatinase subfamily. It depends on Mn(2+) as a cofactor.

It catalyses the reaction agmatine + H2O = urea + putrescine. The protein operates within amine and polyamine biosynthesis; putrescine biosynthesis via agmatine pathway; putrescine from agmatine: step 1/1. In terms of biological role, catalyzes the formation of putrescine from agmatine. The sequence is that of Agmatinase (speB) from Proteus mirabilis.